The sequence spans 309 residues: Probable 4-hydroxy-2-oxoglutarate aldolase, mitochondrial (309 aa).

Substrate is bound at residue 49-50 (SN). Catalysis depends on Lys-173, which acts as the Schiff-base intermediate with substrate.

It belongs to the DapA family.

It catalyses the reaction (4S)-4-hydroxy-2-oxoglutarate = glyoxylate + pyruvate. The enzyme catalyses (4R)-4-hydroxy-2-oxoglutarate = glyoxylate + pyruvate. With respect to regulation, inhibited by divalent cations. Its function is as follows. Catalyzes the final step in the metabolic pathway of hydroxyproline. Involved in osmoadaptation. The polypeptide is Probable 4-hydroxy-2-oxoglutarate aldolase, mitochondrial (Emericella nidulans (strain FGSC A4 / ATCC 38163 / CBS 112.46 / NRRL 194 / M139) (Aspergillus nidulans)).